Reading from the N-terminus, the 93-residue chain is Aspartyl/glutamyl-tRNA(Asn/Gln) amidotransferase subunit C (93 aa).

Belongs to the GatC family. Heterotrimer of A, B and C subunits.

The catalysed reaction is L-glutamyl-tRNA(Gln) + L-glutamine + ATP + H2O = L-glutaminyl-tRNA(Gln) + L-glutamate + ADP + phosphate + H(+). It carries out the reaction L-aspartyl-tRNA(Asn) + L-glutamine + ATP + H2O = L-asparaginyl-tRNA(Asn) + L-glutamate + ADP + phosphate + 2 H(+). Allows the formation of correctly charged Asn-tRNA(Asn) or Gln-tRNA(Gln) through the transamidation of misacylated Asp-tRNA(Asn) or Glu-tRNA(Gln) in organisms which lack either or both of asparaginyl-tRNA or glutaminyl-tRNA synthetases. The reaction takes place in the presence of glutamine and ATP through an activated phospho-Asp-tRNA(Asn) or phospho-Glu-tRNA(Gln). This chain is Aspartyl/glutamyl-tRNA(Asn/Gln) amidotransferase subunit C, found in Helicobacter pylori (strain HPAG1).